The sequence spans 432 residues: MYDRLKGFRDFYPAEMGPRRAAIDAIEDAAASYGFREVGTPAMERTEMYVDKSGAEIVDELYSFTDQGGRDVALTPELTPTVARMVVAKQQALSKPIKWYSSRPFWRYEEPQQGRFREFYQTNLDIFGTSDPRADAEVLAVAADGLTSLGLTGADFEFRVSHRDILGGLLAAFDATVDTEAAIRTVDKREKIERAAYLDDLAAAGLSYDQAEQFDDLLDGDDLDALVSFAGTDRVRDAVANLRNVLDAAETLGVRQYCDVSLTTARGLDYYTGVVFECFDSTGDVGRAVFGGGRYDDLIERFGGQPTPAVGVAPGHATLNLLLENAGVLPDDEFTPDYYVLQVGDTDAEAADVASALRERGNRVDTDITGRSFGAQMNYADNVGADTVVIVGEQDLADGNVTIKNMASGEQTTAPIAAFPGAHDAPRVEDFA.

This sequence belongs to the class-II aminoacyl-tRNA synthetase family.

The protein localises to the cytoplasm. The catalysed reaction is tRNA(His) + L-histidine + ATP = L-histidyl-tRNA(His) + AMP + diphosphate + H(+). The sequence is that of Histidine--tRNA ligase from Halobacterium salinarum (strain ATCC 29341 / DSM 671 / R1).